Reading from the N-terminus, the 182-residue chain is Large ribosomal subunit protein uL6 (182 aa).

The protein belongs to the universal ribosomal protein uL6 family. Part of the 50S ribosomal subunit.

This protein binds to the 23S rRNA, and is important in its secondary structure. It is located near the subunit interface in the base of the L7/L12 stalk, and near the tRNA binding site of the peptidyltransferase center. This chain is Large ribosomal subunit protein uL6, found in Karelsulcia muelleri (strain GWSS) (Sulcia muelleri).